A 193-amino-acid chain; its full sequence is Peptidyl-tRNA hydrolase (193 aa).

Tyrosine 16 provides a ligand contact to tRNA. Histidine 21 serves as the catalytic Proton acceptor. 3 residues coordinate tRNA: phenylalanine 67, asparagine 69, and asparagine 115.

This sequence belongs to the PTH family. Monomer.

Its subcellular location is the cytoplasm. The catalysed reaction is an N-acyl-L-alpha-aminoacyl-tRNA + H2O = an N-acyl-L-amino acid + a tRNA + H(+). Its function is as follows. Hydrolyzes ribosome-free peptidyl-tRNAs (with 1 or more amino acids incorporated), which drop off the ribosome during protein synthesis, or as a result of ribosome stalling. In terms of biological role, catalyzes the release of premature peptidyl moieties from peptidyl-tRNA molecules trapped in stalled 50S ribosomal subunits, and thus maintains levels of free tRNAs and 50S ribosomes. In Psychrobacter arcticus (strain DSM 17307 / VKM B-2377 / 273-4), this protein is Peptidyl-tRNA hydrolase.